The chain runs to 688 residues: Hid-1 family protein P19A11.07c (688 aa).

The protein belongs to the hid-1 family.

The protein resides in the cytoplasm. The protein localises to the nucleus. This is Hid-1 family protein P19A11.07c from Schizosaccharomyces pombe (strain 972 / ATCC 24843) (Fission yeast).